An 88-amino-acid polypeptide reads, in one-letter code: Small ribosomal subunit protein bS16 (88 aa).

This sequence belongs to the bacterial ribosomal protein bS16 family.

The protein is Small ribosomal subunit protein bS16 of Desulfitobacterium hafniense (strain DSM 10664 / DCB-2).